We begin with the raw amino-acid sequence, 457 residues long: UDP-N-acetylmuramate--L-alanine ligase (457 aa).

109-115 is a binding site for ATP; the sequence is GTDGKTT.

This sequence belongs to the MurCDEF family.

The protein resides in the cytoplasm. The catalysed reaction is UDP-N-acetyl-alpha-D-muramate + L-alanine + ATP = UDP-N-acetyl-alpha-D-muramoyl-L-alanine + ADP + phosphate + H(+). The protein operates within cell wall biogenesis; peptidoglycan biosynthesis. Functionally, cell wall formation. This is UDP-N-acetylmuramate--L-alanine ligase from Thermotoga sp. (strain RQ2).